The chain runs to 173 residues: Microfibrillar-associated protein 5 (173 aa).

The first 21 residues, 1–21 (MSLLGPKVLLFLAAFIITSDW), serve as a signal peptide directing secretion. Residues 30–32 (RGD) carry the Cell attachment site motif. T54 is a glycosylation site (O-linked (GalNAc...) threonine). The N-linked (GlcNAc...) asparagine glycan is linked to N79.

It belongs to the MFAP family. Interacts with TGFB2. Interacts with BMP2. Interacts with FBN1 (via N-terminal domain) and FBN2. Forms intermolecular disulfide bonds either with other MAGP-2 molecules or with other components of the microfibrils. Post-translationally, N- and O-glycosylated. O-glycosylated with core 1 or possibly core 8 glycans. O-glycan heterogeneity at Thr-54: HexHexNAc (major) and HexHexNAc + sulfate (minor).

Its subcellular location is the secreted. It is found in the extracellular space. The protein localises to the extracellular matrix. May play a role in hematopoiesis. In the cardiovascular system, could regulate growth factors or participate in cell signaling in maintaining large vessel integrity. Component of the elastin-associated microfibrils. The sequence is that of Microfibrillar-associated protein 5 (MFAP5) from Homo sapiens (Human).